The following is a 471-amino-acid chain: Desmin (471 aa).

Residues 2–109 (SQAYSSSQRV…QEFLTTRTNE (108 aa)) are head. The residue at position 7 (Ser-7) is a Phosphoserine; by CDK1. Phosphoserine; by AURKB is present on Ser-12. Arg-16 is modified (omega-N-methylarginine). Thr-17 bears the Phosphothreonine; by AURKB and ROCK1 mark. Ser-28 carries the phosphoserine; by CDK1 modification. Ser-31 carries the post-translational modification Phosphoserine. Ser-32 carries the phosphoserine; by CDK1 modification. At Arg-37 the chain carries Asymmetric dimethylarginine; alternate. At Arg-37 the chain carries Omega-N-methylarginine; alternate. The residue at position 45 (Ser-45) is a Phosphoserine. ADP-ribosylarginine is present on Arg-58. Ser-60 carries the post-translational modification Phosphoserine; by AURKB. The residue at position 70 (Arg-70) is an Omega-N-methylarginine. Phosphothreonine; by ROCK1 is present on Thr-77. The residue at position 81 (Ser-81) is a Phosphoserine. The IF rod domain occupies 109 to 417 (EKVELQELND…KLLEGEESRI (309 aa)). The coil 1A stretch occupies residues 110–142 (KVELQELNDRFANYIEKVRFLEQQNAALAAEVN). The linker 1 stretch occupies residues 143-152 (RLKGREPTRV). The coil 1B stretch occupies residues 153–253 (AEIYEEELRE…HEEEIRELQA (101 aa)). Positions 254–269 (QLQEQQVQVEMDMSKP) are linker 12. Residues 269–416 (PDLTAALRDI…RKLLEGEESR (148 aa)) form an interaction with NEB region. Residues 270 to 288 (DLTAALRDIRAQYETIAAK) form a coil 2A region. Residues 289-296 (NISEAEEW) form a linker 2 region. A phosphoserine mark is found at Ser-291, Ser-359, Ser-362, and Ser-425. The coil 2B stretch occupies residues 297–413 (YKSKVSDLTQ…ATYRKLLEGE (117 aa)). The tract at residues 414-471 (ESRINLPIQTFSALNFRETSPEQRGSEVHTKKTVMIKTIETRDGEVVSEATQQQHEVL) is tail. Residues 439–454 (SEVHTKKTVMIKTIET) are interaction with CRYAB.

Belongs to the intermediate filament family. In terms of assembly, homomer. Interacts with DST. Interacts with MTM1. Interacts with EPPK1; interaction is dependent of higher-order structure of intermediate filament. Interacts with CRYAB. Interacts with NEB (via nebulin repeats 160-164). Interacts (via rod region) with NEBL (via nebulin repeats 1-5). Interacts with ASB2; the interaction targets DES for proteasomal degradation. Interacts with PKP1. Interacts with FLII. Post-translationally, ADP-ribosylation prevents ability to form intermediate filaments. Phosphorylation at Ser-7, Ser-28 and Ser-32 by CDK1 and phosphorylation at Ser-60 by AURKB contribute to efficient separation of desmin intermediate filaments during mitosis. In terms of processing, ubiquitination by a SCF-like complex containing ASB2 leads to proteasomal degradation.

The protein resides in the cytoplasm. Its subcellular location is the myofibril. It localises to the sarcomere. The protein localises to the z line. It is found in the cell membrane. The protein resides in the sarcolemma. Its subcellular location is the nucleus. It localises to the cell tip. The protein localises to the nucleus envelope. In terms of biological role, muscle-specific type III intermediate filament essential for proper muscular structure and function. Plays a crucial role in maintaining the structure of sarcomeres, inter-connecting the Z-disks and forming the myofibrils, linking them not only to the sarcolemmal cytoskeleton, but also to the nucleus and mitochondria, thus providing strength for the muscle fiber during activity. In adult striated muscle they form a fibrous network connecting myofibrils to each other and to the plasma membrane from the periphery of the Z-line structures. May act as a sarcomeric microtubule-anchoring protein: specifically associates with detyrosinated tubulin-alpha chains, leading to buckled microtubules and mechanical resistance to contraction. Required for nuclear membrane integrity, via anchoring at the cell tip and nuclear envelope, resulting in maintenance of microtubule-derived intracellular mechanical forces. Contributes to the transcriptional regulation of the NKX2-5 gene in cardiac progenitor cells during a short period of cardiomyogenesis and in cardiac side population stem cells in the adult. Plays a role in maintaining an optimal conformation of nebulette (NEB) on heart muscle sarcomeres to bind and recruit cardiac alpha-actin. This Sus scrofa (Pig) protein is Desmin (DES).